We begin with the raw amino-acid sequence, 151 residues long: uncharacterized protein (151 aa).

3 consecutive 4Fe-4S ferredoxin-type domains span residues 4–32 (KIIVLNPEKCTKCYDCINICKEIHGESRV), 33–63 (RKVDGIPIFCMQCENAPCKEICPVDAIYLKD), and 64–93 (GIPIVDKERCIACGMCAIACPIGAIFIKNR). 16 residues coordinate [4Fe-4S] cluster: cysteine 13, cysteine 16, cysteine 19, cysteine 23, cysteine 42, cysteine 45, cysteine 50, cysteine 54, cysteine 73, cysteine 76, cysteine 79, cysteine 83, cysteine 98, cysteine 101, cysteine 111, and cysteine 115.

Requires [4Fe-4S] cluster as cofactor.

This is an uncharacterized protein from Methanocaldococcus jannaschii (strain ATCC 43067 / DSM 2661 / JAL-1 / JCM 10045 / NBRC 100440) (Methanococcus jannaschii).